The sequence spans 51 residues: Ribosomal protein eL39-like 2 (51 aa).

It belongs to the eukaryotic ribosomal protein eL39 family. Component of a male germ cell-specific 60S large ribosomal subunit (LSU), which contains RPL10L and RPL39L, instead of RPL10 and RPL39 paralogs. The composition of the rest of the complex is similar to classical ribosomes. Testis specific.

The protein resides in the cytoplasm. Functionally, male germ cell-specific component of the ribosome, which is required for the formation of sperm and male fertility. Replaces the RPL39 paralog in the ribosome of male germ cells. The ribosome is a large ribonucleoprotein complex responsible for the synthesis of proteins in the cell. The male germ cell-specific ribosome displays a ribosomal polypeptide exit tunnel of distinct size and charge states compared with the classical ribosome. It is responsible for regulating the biosynthesis and folding of a subset of male germ-cell-specific proteins that are essential for the formation of sperm. The sequence is that of Ribosomal protein eL39-like 2 from Homo sapiens (Human).